The primary structure comprises 1172 residues: DNA-directed RNA polymerases IV and V subunit 2 (1172 aa).

Mg(2+) is bound at residue D786. Residues C1108, C1111, C1133, and C1136 each contribute to the Zn(2+) site. The segment at C1108–C1136 adopts a C4-type zinc-finger fold.

The protein belongs to the RNA polymerase beta chain family. In terms of assembly, component of the RNA polymerase IV and V complexes. Interacts with SSH1, NRPD1 and NRPE1. As to expression, mostly expressed in seedlings, flowers and roots, present ubiquitously, except in sperm cells.

It is found in the nucleus. It carries out the reaction RNA(n) + a ribonucleoside 5'-triphosphate = RNA(n+1) + diphosphate. Its function is as follows. DNA-dependent RNA polymerase catalyzes the transcription of DNA into RNA using the four ribonucleoside triphosphates as substrates. Second largest component of RNA polymerases IV and V which mediate short-interfering RNAs (siRNA) accumulation and subsequent RNA-directed DNA methylation-dependent (RdDM) transcriptional gene silencing (TGS) of endogenous repeated sequences, including transposable elements. Proposed to contribute to the polymerase catalytic activity and forms the polymerase active center together with the largest subunit. Also required for full erasure of methylation when the RNA trigger is withdrawn. Required for intercellular RNA interference (RNAi) leading to systemic post-transcriptional gene silencing. Involved in the maintenance of post-transcriptional RNA silencing. During interphase, mediates siRNA-independent heterochromatin association and methylation into chromocenters and condensation and cytosine methylation at pericentromeric major repeats. Required for complete maintenance of the 35S promoter homology-dependent TGS in transgenic plants and for the initial establishment of DNA methylation. The protein is DNA-directed RNA polymerases IV and V subunit 2 (NRPD2) of Arabidopsis thaliana (Mouse-ear cress).